Here is a 102-residue protein sequence, read N- to C-terminus: Small ribosomal subunit protein uS10 (102 aa).

This sequence belongs to the universal ribosomal protein uS10 family. As to quaternary structure, part of the 30S ribosomal subunit.

Involved in the binding of tRNA to the ribosomes. This is Small ribosomal subunit protein uS10 from Thermotoga maritima (strain ATCC 43589 / DSM 3109 / JCM 10099 / NBRC 100826 / MSB8).